Here is a 69-residue protein sequence, read N- to C-terminus: MAESRQTRLQVKCPTCQTAVVWKPENAFRPFCSQRCKLIDLGGWADGKYTVSGQTESLPEISEPDGAYR.

Cysteine 13, cysteine 16, cysteine 32, and cysteine 36 together coordinate Zn(2+).

Belongs to the DNA gyrase inhibitor YacG family. In terms of assembly, interacts with GyrB. It depends on Zn(2+) as a cofactor.

Inhibits all the catalytic activities of DNA gyrase by preventing its interaction with DNA. Acts by binding directly to the C-terminal domain of GyrB, which probably disrupts DNA binding by the gyrase. The polypeptide is DNA gyrase inhibitor YacG (Neisseria gonorrhoeae (strain ATCC 700825 / FA 1090)).